Consider the following 190-residue polypeptide: Holliday junction branch migration complex subunit RuvA (190 aa).

The interval 1–63 (MIRKINATIE…EWNTSLYIFK (63 aa)) is domain I. Residues 64–138 (DKIERDVFES…NSFSAYSTGA (75 aa)) form a domain II region. Residues 138–142 (ADTQS) form a flexible linker region. Residues 143–190 (YGNNNLKEAIEALETLGFQRYEIMKVIGQLDLEDLKTEEIIKECLTRL) form a domain III region.

It belongs to the RuvA family. Homotetramer. Forms an RuvA(8)-RuvB(12)-Holliday junction (HJ) complex. HJ DNA is sandwiched between 2 RuvA tetramers; dsDNA enters through RuvA and exits via RuvB. An RuvB hexamer assembles on each DNA strand where it exits the tetramer. Each RuvB hexamer is contacted by two RuvA subunits (via domain III) on 2 adjacent RuvB subunits; this complex drives branch migration. In the full resolvosome a probable DNA-RuvA(4)-RuvB(12)-RuvC(2) complex forms which resolves the HJ.

The protein resides in the cytoplasm. The RuvA-RuvB-RuvC complex processes Holliday junction (HJ) DNA during genetic recombination and DNA repair, while the RuvA-RuvB complex plays an important role in the rescue of blocked DNA replication forks via replication fork reversal (RFR). RuvA specifically binds to HJ cruciform DNA, conferring on it an open structure. The RuvB hexamer acts as an ATP-dependent pump, pulling dsDNA into and through the RuvAB complex. HJ branch migration allows RuvC to scan DNA until it finds its consensus sequence, where it cleaves and resolves the cruciform DNA. The chain is Holliday junction branch migration complex subunit RuvA from Petrotoga mobilis (strain DSM 10674 / SJ95).